Here is an 898-residue protein sequence, read N- to C-terminus: Alanine--tRNA ligase (898 aa).

Residues His564, His568, Cys682, and His686 each coordinate Zn(2+).

Belongs to the class-II aminoacyl-tRNA synthetase family. It depends on Zn(2+) as a cofactor.

The protein resides in the cytoplasm. The catalysed reaction is tRNA(Ala) + L-alanine + ATP = L-alanyl-tRNA(Ala) + AMP + diphosphate. Catalyzes the attachment of alanine to tRNA(Ala) in a two-step reaction: alanine is first activated by ATP to form Ala-AMP and then transferred to the acceptor end of tRNA(Ala). Also edits incorrectly charged Ser-tRNA(Ala) and Gly-tRNA(Ala) via its editing domain. This chain is Alanine--tRNA ligase, found in Beijerinckia indica subsp. indica (strain ATCC 9039 / DSM 1715 / NCIMB 8712).